The sequence spans 443 residues: Serine--tRNA ligase (443 aa).

246 to 248 contributes to the L-serine binding site; sequence TAE. 277–279 is an ATP binding site; the sequence is RAE. Glu-300 lines the L-serine pocket. ATP is bound at residue 367–370; it reads EISS. Position 402 (Ser-402) interacts with L-serine.

This sequence belongs to the class-II aminoacyl-tRNA synthetase family. Type-1 seryl-tRNA synthetase subfamily. Homodimer. The tRNA molecule binds across the dimer.

It is found in the cytoplasm. The catalysed reaction is tRNA(Ser) + L-serine + ATP = L-seryl-tRNA(Ser) + AMP + diphosphate + H(+). It carries out the reaction tRNA(Sec) + L-serine + ATP = L-seryl-tRNA(Sec) + AMP + diphosphate + H(+). It participates in aminoacyl-tRNA biosynthesis; selenocysteinyl-tRNA(Sec) biosynthesis; L-seryl-tRNA(Sec) from L-serine and tRNA(Sec): step 1/1. Catalyzes the attachment of serine to tRNA(Ser). Is also able to aminoacylate tRNA(Sec) with serine, to form the misacylated tRNA L-seryl-tRNA(Sec), which will be further converted into selenocysteinyl-tRNA(Sec). In Bradyrhizobium diazoefficiens (strain JCM 10833 / BCRC 13528 / IAM 13628 / NBRC 14792 / USDA 110), this protein is Serine--tRNA ligase.